We begin with the raw amino-acid sequence, 133 residues long: ATP synthase epsilon chain, chloroplastic (133 aa).

Belongs to the ATPase epsilon chain family. F-type ATPases have 2 components, CF(1) - the catalytic core - and CF(0) - the membrane proton channel. CF(1) has five subunits: alpha(3), beta(3), gamma(1), delta(1), epsilon(1). CF(0) has three main subunits: a, b and c.

It localises to the plastid. It is found in the chloroplast thylakoid membrane. Produces ATP from ADP in the presence of a proton gradient across the membrane. In Nicotiana tomentosiformis (Tobacco), this protein is ATP synthase epsilon chain, chloroplastic.